A 283-amino-acid chain; its full sequence is MIVTDKISDVRNIIKEQKLSGKKIGLVPTMGYLHEGHLSLVRIAKKHSDFVAVSIFVNPIQFGPNEDFDRYPRDLERDLKLLEKEGCDLVFAPSVEEMYPSELLTTVNVDKITEKLCGAFRPGHFKGVTTVVAKLFNIFTPDIAVFGQKDAQQVAVIKKMVEDLNFPVEIIKAPIVRESDGLAMSSRNVYLNPEERKAALILSKSLKEAEKLLLNGERNANTIIKKVNEVLNSEPLCKVQYVSCVHPDTLEDLTYIKDKALIAIACFIGTTRLIDNLLWGENI.

30–37 (MGYLHEGH) contacts ATP. Catalysis depends on His-37, which acts as the Proton donor. (R)-pantoate is bound at residue Gln-61. Residue Gln-61 participates in beta-alanine binding. An ATP-binding site is contributed by 147–150 (GQKD). Gln-153 contributes to the (R)-pantoate binding site. ATP contacts are provided by residues Val-176 and 184 to 187 (MSSR).

The protein belongs to the pantothenate synthetase family. In terms of assembly, homodimer.

Its subcellular location is the cytoplasm. The catalysed reaction is (R)-pantoate + beta-alanine + ATP = (R)-pantothenate + AMP + diphosphate + H(+). The protein operates within cofactor biosynthesis; (R)-pantothenate biosynthesis; (R)-pantothenate from (R)-pantoate and beta-alanine: step 1/1. Catalyzes the condensation of pantoate with beta-alanine in an ATP-dependent reaction via a pantoyl-adenylate intermediate. The chain is Pantothenate synthetase from Thermoanaerobacter sp. (strain X514).